The primary structure comprises 224 residues: Small ribosomal subunit protein uS3 (224 aa).

The region spanning 39-107 (VRKYIQNALA…PVHINIEEIR (69 aa)) is the KH type-2 domain.

The protein belongs to the universal ribosomal protein uS3 family. Part of the 30S ribosomal subunit. Forms a tight complex with proteins S10 and S14.

Its function is as follows. Binds the lower part of the 30S subunit head. Binds mRNA in the 70S ribosome, positioning it for translation. This Saccharophagus degradans (strain 2-40 / ATCC 43961 / DSM 17024) protein is Small ribosomal subunit protein uS3.